The primary structure comprises 591 residues: Serine/threonine-protein kinase Nek2 (591 aa).

One can recognise a Protein kinase domain in the interval 4–258 (YEVLEQIGKG…AAQLLKHPQL (255 aa)). Residues 10–18 (IGKGAFGSA) and K33 each bind ATP. D129 (proton acceptor) is an active-site residue. 3 disordered regions span residues 309-331 (LGNE…SSTR), 387-408 (EPPK…TTPN), and 500-534 (RTDG…DTSS). 2 stretches are compositionally biased toward polar residues: residues 391-408 (TSYN…TTPN) and 504-534 (DNGS…DTSS).

Belongs to the protein kinase superfamily. NEK Ser/Thr protein kinase family. NIMA subfamily.

It carries out the reaction L-seryl-[protein] + ATP = O-phospho-L-seryl-[protein] + ADP + H(+). It catalyses the reaction L-threonyl-[protein] + ATP = O-phospho-L-threonyl-[protein] + ADP + H(+). In terms of biological role, may be involved in plant development processes. In Oryza sativa subsp. indica (Rice), this protein is Serine/threonine-protein kinase Nek2 (NEK2).